The primary structure comprises 252 residues: Enolase-phosphatase E1 (252 aa).

Mg(2+) is bound by residues D18 and E20. Residues 149–150 (SS) and K184 each bind substrate. A Mg(2+)-binding site is contributed by D209.

Belongs to the HAD-like hydrolase superfamily. MasA/MtnC family. Monomer. Mg(2+) is required as a cofactor.

Its subcellular location is the cytoplasm. The protein localises to the nucleus. The enzyme catalyses 5-methylsulfanyl-2,3-dioxopentyl phosphate + H2O = 1,2-dihydroxy-5-(methylsulfanyl)pent-1-en-3-one + phosphate. It functions in the pathway amino-acid biosynthesis; L-methionine biosynthesis via salvage pathway; L-methionine from S-methyl-5-thio-alpha-D-ribose 1-phosphate: step 3/6. It participates in amino-acid biosynthesis; L-methionine biosynthesis via salvage pathway; L-methionine from S-methyl-5-thio-alpha-D-ribose 1-phosphate: step 4/6. In terms of biological role, bifunctional enzyme that catalyzes the enolization of 2,3-diketo-5-methylthiopentyl-1-phosphate (DK-MTP-1-P) into the intermediate 2-hydroxy-3-keto-5-methylthiopentenyl-1-phosphate (HK-MTPenyl-1-P), which is then dephosphorylated to form the acireductone 1,2-dihydroxy-3-keto-5-methylthiopentene (DHK-MTPene). This is Enolase-phosphatase E1 from Naegleria gruberi (Amoeba).